The primary structure comprises 280 residues: Probable endonuclease 4 (280 aa).

Positions 77, 117, 148, 180, 183, 215, 228, 230, and 259 each coordinate Zn(2+).

Belongs to the AP endonuclease 2 family. The cofactor is Zn(2+).

It carries out the reaction Endonucleolytic cleavage to 5'-phosphooligonucleotide end-products.. In terms of biological role, endonuclease IV plays a role in DNA repair. It cleaves phosphodiester bonds at apurinic or apyrimidinic (AP) sites, generating a 3'-hydroxyl group and a 5'-terminal sugar phosphate. This Thermoplasma volcanium (strain ATCC 51530 / DSM 4299 / JCM 9571 / NBRC 15438 / GSS1) protein is Probable endonuclease 4.